The primary structure comprises 39 residues: MKGSKLFQMQKCMPVWCRTGTCIILPVACHMAKPLKLPT.

This is an uncharacterized protein from Saccharomyces cerevisiae (strain ATCC 204508 / S288c) (Baker's yeast).